Consider the following 690-residue polypeptide: Elongation factor G (690 aa).

The 275-residue stretch at 8-282 (DKVRNIGIMA…AIVNYLPSPL (275 aa)) folds into the tr-type G domain. GTP contacts are provided by residues 17-24 (AHIDAGKT), 81-85 (DTPGH), and 135-138 (NKMD).

It belongs to the TRAFAC class translation factor GTPase superfamily. Classic translation factor GTPase family. EF-G/EF-2 subfamily.

Its subcellular location is the cytoplasm. Functionally, catalyzes the GTP-dependent ribosomal translocation step during translation elongation. During this step, the ribosome changes from the pre-translocational (PRE) to the post-translocational (POST) state as the newly formed A-site-bound peptidyl-tRNA and P-site-bound deacylated tRNA move to the P and E sites, respectively. Catalyzes the coordinated movement of the two tRNA molecules, the mRNA and conformational changes in the ribosome. This Caldanaerobacter subterraneus subsp. tengcongensis (strain DSM 15242 / JCM 11007 / NBRC 100824 / MB4) (Thermoanaerobacter tengcongensis) protein is Elongation factor G.